The sequence spans 168 residues: G/U mismatch-specific DNA glycosylase (168 aa).

The protein belongs to the uracil-DNA glycosylase (UDG) superfamily. TDG/mug family. As to quaternary structure, binds DNA as a monomer.

Its subcellular location is the cytoplasm. It catalyses the reaction Specifically hydrolyzes mismatched double-stranded DNA and polynucleotides, releasing free uracil.. Functionally, excises ethenocytosine and uracil, which can arise by alkylation or deamination of cytosine, respectively, from the corresponding mispairs with guanine in ds-DNA. It is capable of hydrolyzing the carbon-nitrogen bond between the sugar-phosphate backbone of the DNA and the mispaired base. The complementary strand guanine functions in substrate recognition. Required for DNA damage lesion repair in stationary-phase cells. The protein is G/U mismatch-specific DNA glycosylase of Escherichia coli O157:H7 (strain EC4115 / EHEC).